A 488-amino-acid chain; its full sequence is Glutamyl-tRNA(Gln) amidotransferase subunit A (488 aa).

Residues lysine 77 and serine 152 each act as charge relay system in the active site. Serine 176 serves as the catalytic Acyl-ester intermediate.

Belongs to the amidase family. GatA subfamily. Heterotrimer of A, B and C subunits.

The catalysed reaction is L-glutamyl-tRNA(Gln) + L-glutamine + ATP + H2O = L-glutaminyl-tRNA(Gln) + L-glutamate + ADP + phosphate + H(+). Its function is as follows. Allows the formation of correctly charged Gln-tRNA(Gln) through the transamidation of misacylated Glu-tRNA(Gln) in organisms which lack glutaminyl-tRNA synthetase. The reaction takes place in the presence of glutamine and ATP through an activated gamma-phospho-Glu-tRNA(Gln). In Streptococcus suis (strain 05ZYH33), this protein is Glutamyl-tRNA(Gln) amidotransferase subunit A.